Here is a 338-residue protein sequence, read N- to C-terminus: Ferredoxin--NADP reductase (338 aa).

FAD is bound by residues Asp35, Gln43, Tyr48, Ala88, Phe122, Asp289, and Thr330.

The protein belongs to the ferredoxin--NADP reductase type 2 family. Homodimer. FAD serves as cofactor.

It carries out the reaction 2 reduced [2Fe-2S]-[ferredoxin] + NADP(+) + H(+) = 2 oxidized [2Fe-2S]-[ferredoxin] + NADPH. The chain is Ferredoxin--NADP reductase from Ehrlichia canis (strain Jake).